The chain runs to 305 residues: Putative ABC transporter molybdenum-binding protein HVO_B0369 (305 aa).

The segment at residues 1-40 (MNPDSAAGRSSRRAFLAAVGGVAAGGLTATAGCLGRGEEA) is a signal peptide (tat-type signal).

It belongs to the bacterial solute-binding protein 1 family. WtpA subfamily. In terms of assembly, the complex is composed of two ATP-binding proteins, two transmembrane proteins (HVO_B0370) and a solute-binding protein (HVO_B0369). Predicted to be exported by the Tat system. The position of the signal peptide cleavage has not been experimentally proven.

Its function is as follows. Part of an ABC transporter complex involved in molybdenum import. The chain is Putative ABC transporter molybdenum-binding protein HVO_B0369 from Haloferax volcanii (strain ATCC 29605 / DSM 3757 / JCM 8879 / NBRC 14742 / NCIMB 2012 / VKM B-1768 / DS2) (Halobacterium volcanii).